The chain runs to 163 residues: MLLAIKDFFNSLLLKELFKGMALTGRYLFARKITVQFPEEKTPISPRFRGLHALRRYPNGEERCIACKLCEAVCPALAITIESDARADGTRRTTRYDIDLTKCIFCGFCEEACPVDAIVETQILEYHGEKRGDLYFTKDMLLAVGDRYEPQIAAAKAADAKYR.

2 4Fe-4S ferredoxin-type domains span residues 54–84 (LRRY…IESD) and 94–123 (TRYD…ETQI). Residues Cys64, Cys67, Cys70, Cys74, Cys103, Cys106, Cys109, and Cys113 each coordinate [4Fe-4S] cluster.

Belongs to the complex I 23 kDa subunit family. In terms of assembly, NDH-1 is composed of 14 different subunits. Subunits NuoA, H, J, K, L, M, N constitute the membrane sector of the complex. [4Fe-4S] cluster is required as a cofactor.

Its subcellular location is the cell inner membrane. It carries out the reaction a quinone + NADH + 5 H(+)(in) = a quinol + NAD(+) + 4 H(+)(out). NDH-1 shuttles electrons from NADH, via FMN and iron-sulfur (Fe-S) centers, to quinones in the respiratory chain. The immediate electron acceptor for the enzyme in this species is believed to be ubiquinone. Couples the redox reaction to proton translocation (for every two electrons transferred, four hydrogen ions are translocated across the cytoplasmic membrane), and thus conserves the redox energy in a proton gradient. The chain is NADH-quinone oxidoreductase subunit I from Cupriavidus necator (strain ATCC 17699 / DSM 428 / KCTC 22496 / NCIMB 10442 / H16 / Stanier 337) (Ralstonia eutropha).